The chain runs to 122 residues: Ribosome-binding factor A (122 aa).

The protein belongs to the RbfA family. Monomer. Binds 30S ribosomal subunits, but not 50S ribosomal subunits or 70S ribosomes.

The protein localises to the cytoplasm. One of several proteins that assist in the late maturation steps of the functional core of the 30S ribosomal subunit. Associates with free 30S ribosomal subunits (but not with 30S subunits that are part of 70S ribosomes or polysomes). Required for efficient processing of 16S rRNA. May interact with the 5'-terminal helix region of 16S rRNA. In Albidiferax ferrireducens (strain ATCC BAA-621 / DSM 15236 / T118) (Rhodoferax ferrireducens), this protein is Ribosome-binding factor A.